A 2407-amino-acid chain; its full sequence is Daf-12-interacting protein 1 (2407 aa).

Over residues 90–112 (QNSSMASMSSTPSSGQSSSPRNA) the composition is skewed to low complexity. The segment at 90–152 (QNSSMASMSS…PHLSVQSQQR (63 aa)) is disordered. The region spanning 277–335 (CSVHVPHLDRHSPDHYRRRFESYGQVIDVDMVKSNDNKAFAVVQFTNIDDAQKALQDTN) is the RRM domain. 11 disordered regions span residues 439 to 632 (EVAA…LELD), 737 to 767 (ATDS…TNRL), 785 to 849 (LCIG…GRPA), 874 to 896 (PTHD…ETMV), 921 to 986 (LIAA…PSNA), 993 to 1012 (RSQS…TPVV), 1025 to 1844 (SNQP…EDSE), 1858 to 1918 (IAQE…VNNH), 1932 to 1976 (LQPA…QQSD), 2077 to 2103 (EENE…LAAA), and 2172 to 2200 (SIQR…VNQN). Residues 443 to 456 (RSSSPTSKSENDQG) show a composition bias toward polar residues. A compositionally biased stretch (acidic residues) spans 512–529 (EDSDEQNDVDEEDDEDVV). 3 stretches are compositionally biased toward basic and acidic residues: residues 530-541 (SEEKRHEPEEGK), 548-564 (GHRD…DSSE), and 573-586 (SHHE…KDSE). The segment covering 587 to 603 (AYQSRSFSPLNYQSQSP) has biased composition (polar residues). Over residues 618-627 (SPTTSSASSS) the composition is skewed to low complexity. Polar residues-rich tracts occupy residues 791–826 (TPST…TPRS) and 837–849 (SRHN…GRPA). Residues 924 to 946 (ATSTGTHSVSSSAHSTPRHSISG) show a composition bias toward polar residues. Over residues 966 to 978 (SRPEKVQIRHDTI) the composition is skewed to basic and acidic residues. Positions 1043–1052 (SALQNIQNHQ) are enriched in polar residues. Residues 1053-1070 (PPHSNANSTPSTPSTSTH) show a composition bias toward low complexity. Positions 1086–1153 (KEKEEREREA…KVRKKAEKEK (68 aa)) are enriched in basic and acidic residues. Residues 1165-1177 (SDESDSDSNDELD) show a composition bias toward acidic residues. 6 stretches are compositionally biased toward basic and acidic residues: residues 1178 to 1195 (LDVR…KDHQ), 1218 to 1227 (RAHDSFEKMQ), 1279 to 1293 (ADQR…EKGE), 1304 to 1320 (NDAG…DREN), 1335 to 1355 (QGER…DAAA), and 1376 to 1398 (RRSS…PHED). Composition is skewed to low complexity over residues 1456–1471 (PKHL…TKRS) and 1488–1498 (TTSSTSTATTS). Polar residues predominate over residues 1534–1547 (SMNSAADSPMSTTG). Over residues 1570–1595 (SSSGQHDSSSGSSSDSSSSDGSTSSD) the composition is skewed to low complexity. Composition is skewed to basic and acidic residues over residues 1679 to 1691 (SEEH…HGDS) and 1703 to 1726 (EHQE…HEEQ). A compositionally biased stretch (polar residues) spans 1749–1770 (TQAQEKSAHTLISDQETDQAVQ). A compositionally biased stretch (basic and acidic residues) spans 1792–1805 (NEKEVSGKDPHNIK). Residues 1809–1826 (PLNNGHTDLLFSPSSSAH) show a composition bias toward polar residues. 2 stretches are compositionally biased toward basic and acidic residues: residues 1827-1836 (ASEKQSTKSE) and 1873-1892 (EEVK…KMEE). Polar residues-rich tracts occupy residues 1895 to 1911 (EQTP…SQDT) and 1932 to 1942 (LQPASQHQVAQ). Low complexity predominate over residues 1962–1975 (SQQSQPSPMSSQQS). Positions 2049 to 2110 (NQMMQAKMKQ…AAATAAATMA (62 aa)) form a coiled coil. The segment covering 2077 to 2099 (EENERKVEEDRREKQRKEEERQR) has biased composition (basic and acidic residues). Positions 2176–2186 (PSSTASTSSNP) are enriched in low complexity. Residues 2213-2383 (QRWFYKHFPM…TRYLLIVFTN (171 aa)) enclose the SPOC domain.

Isoform d interacts with daf-12. Isoform d is widely expressed: detected in the hypodermis, seam cells, intestine, somatic gonad, neurons, vulval precursors, body wall muscle and pharynx.

The protein localises to the nucleus. Probable transcriptional corepressor which modulates activity of the nuclear hormone receptor daf-12 to regulate the dauer diapause. The polypeptide is Daf-12-interacting protein 1 (Caenorhabditis elegans).